A 127-amino-acid polypeptide reads, in one-letter code: Large ribosomal subunit protein mL55 (127 aa).

The transit peptide at 1-32 (MPLAILLSLLRHCGVRAALPTPRHLHTSPWRA) directs the protein to the mitochondrion. Ser-84 is modified (phosphoserine).

Belongs to the mitochondrion-specific ribosomal protein mL55 family. In terms of assembly, component of the mitochondrial ribosome large subunit (39S) which comprises a 16S rRNA and about 50 distinct proteins.

It localises to the mitochondrion. This is Large ribosomal subunit protein mL55 (Mrpl55) from Mus musculus (Mouse).